Consider the following 211-residue polypeptide: Protein-L-isoaspartate O-methyltransferase 1 (211 aa).

S62 is an active-site residue.

The protein belongs to the methyltransferase superfamily. L-isoaspartyl/D-aspartyl protein methyltransferase family.

It is found in the cytoplasm. The catalysed reaction is [protein]-L-isoaspartate + S-adenosyl-L-methionine = [protein]-L-isoaspartate alpha-methyl ester + S-adenosyl-L-homocysteine. Functionally, catalyzes the methyl esterification of L-isoaspartyl residues in peptides and proteins that result from spontaneous decomposition of normal L-aspartyl and L-asparaginyl residues. It plays a role in the repair and/or degradation of damaged proteins. The protein is Protein-L-isoaspartate O-methyltransferase 1 of Shewanella sediminis (strain HAW-EB3).